Reading from the N-terminus, the 104-residue chain is Large ribosomal subunit protein bL21 (104 aa).

The protein belongs to the bacterial ribosomal protein bL21 family. Part of the 50S ribosomal subunit. Contacts protein L20.

Its function is as follows. This protein binds to 23S rRNA in the presence of protein L20. The polypeptide is Large ribosomal subunit protein bL21 (Streptococcus gordonii (strain Challis / ATCC 35105 / BCRC 15272 / CH1 / DL1 / V288)).